The chain runs to 517 residues: Ovoinhibitor (517 aa).

7 consecutive Kazal-like domains span residues 67–132 (FGIE…ECRP), 133–197 (KHVT…ECKL), 198–263 (EIGS…KCRQ), 264–329 (EIPE…RCKE), 330–394 (RSTP…RCRE), 395–460 (EVPE…RCEE), and 461–517 (DITK…MAAC). An N-linked (GlcNAc...) asparagine glycan is attached at N72. Cystine bridges form between C73-C112, C90-C109, C98-C130, C139-C177, C155-C174, C163-C195, C204-C243, C221-C240, C229-C261, C270-C309, C287-C306, C295-C327, C336-C374, C352-C371, C360-C392, C401-C440, C418-C437, C426-C458, C467-C499, C477-C496, and C485-C517. An N-linked (GlcNAc...) asparagine glycan is attached at N186. Residue N506 is glycosylated (N-linked (GlcNAc...) asparagine).

In terms of processing, glycosylated. In terms of tissue distribution, expressed in oviduct (at protein level). Expressed in egg white (at protein level). Expressed in egg yolk plasma of non-fertilized eggs (at protein level). Expressed in the magnum of the oviduct (at protein level). Expressed in oviduct. Expressed in liver. Expressed in the cortico-medullary border region of the bursa of Fabricius by the bursal secretory dendritic-like cells. Highly expressed in the magnum of the oviduct, and at a lower level in uterus. Weakly expressed in white isthmus and very weakly in infundibulum. Not expressed in duodenum and kidney.

It localises to the secreted. Serine protease inhibitor involved in antimicrobial egg defense preventing contamination of table eggs (non-fertilized eggs) and protecting the chick embryo (fertilized eggs). Inhibits trypsin, chymotrypsin, elastase, subtilisin and a proteinase of fungus Aspergillus oryzae. Inhibits calcium-activated potassium channels KCNMA1 (bovine) and slo (Drosophila). Has antibacterial activity against B.thuringiensis LMSA 3.06.004, but not against S.aureus CIP 103 811, P.aeruginosa PAO1, B.cereus ATCC6464 or B.subtilis ATCC 6633. This is Ovoinhibitor from Gallus gallus (Chicken).